Here is a 395-residue protein sequence, read N- to C-terminus: Protein hedgehog (395 aa).

An N-terminal signal peptide occupies residues 1–26; it reads MDNHSSVPWASAASVTCLSLDAKCHS. The segment covering 26–43 has biased composition (low complexity); sequence SSSSSCSSKSTASSISAS. The segment at 26–46 is disordered; sequence SSSSSCSSKSTASSISASPET. Positions 27-82 are excised as a propeptide; it reads SSSSCSSKSTASSISASPETQTMRHIAHTQRCLSRLTSLVALLLIVLPMMFSPAHS. Cys83 carries the N-palmitoyl cysteine lipid modification. 7 residues coordinate Ca(2+): Glu147, Glu148, Asp153, Thr183, Glu184, Asp187, and Asp189. Residue Gly255 is the site of Cholesterol glycine ester attachment.

This sequence belongs to the hedgehog family. In terms of assembly, interacts with shf. The C-terminal part of the hedgehog protein precursor displays an autoproteolysis activity that results in the cleavage of the full-length protein into two parts (N-product and C-product). In addition, the C-terminal part displays a cholesterol transferase activity that results by the covalent attachment of a cholesterol moiety to the C-terminal of the newly generated N-product. The N-product is the active species in both local and long-range signaling, whereas the C-product has no signaling activity. Post-translationally, cholesterylation is required for N-product targeting to lipid rafts and multimerization. In terms of processing, N-palmitoylation by Rasp of the hedgehog N-product, within the secretory pathway, is required for the embryonic and larval patterning activities of the hedgehog signal.

The protein resides in the nucleus. It localises to the cytoplasm. It is found in the cell membrane. The enzyme catalyses glycyl-L-cysteinyl-[protein] + cholesterol + H(+) = [protein]-C-terminal glycyl cholesterol ester + N-terminal L-cysteinyl-[protein]. Its function is as follows. The C-terminal part of the hedgehog protein precursor displays an autoproteolysis activity that results in the cleavage of the full-length protein into two parts (N-product and C-product). In addition, the C-terminal part displays a cholesterol transferase activity that results by the covalent attachment of a cholesterol moiety to the C-terminal of the newly generated N-product. Once cleaved, the C-product has no signaling activity and diffuses from the cell. Functionally, the dually lipidated hedgehog protein N-product is a morphogen which is essential for a variety of patterning events during development. Establishes the anterior-posterior axis of the embryonic segments and patterns the larval imaginal disks. Binds to the patched (ptc) receptor, which functions in association with smoothened (smo), to activate the transcription of target genes wingless (wg), decapentaplegic (dpp) and ptc. In the absence of hh, ptc represses the constitutive signaling activity of smo through fused (fu). Essential component of a signaling pathway which regulates the Duox-dependent gut immune response to bacterial uracil; required to activate Cad99C-dependent endosome formation, norpA-dependent Ca2+ mobilization and p38 MAPK, which are essential steps in the Duox-dependent production of reactive oxygen species (ROS) in response to intestinal bacterial infection. During photoreceptor differentiation, it up-regulates transcription of Ubr3, which in turn promotes the hh-signaling pathway by mediating the ubiquitination and degradation of cos. This chain is Protein hedgehog, found in Drosophila simulans (Fruit fly).